We begin with the raw amino-acid sequence, 473 residues long: H(+)/Cl(-) exchange transporter ClcA (473 aa).

Residues 1 to 32 are Cytoplasmic-facing; the sequence is MKTDTPSLETPQAARLRRRQLIRQLLERDKTP. Residues 33–69 form a helical membrane-spanning segment; it reads LAILFMAAVVGTLVGLAAVAFDKGVAWLQNQRMGALV. At 70–76 the chain is on the periplasmic side; the sequence is HTADNYP. Residues 77–100 form a helical membrane-spanning segment; that stretch reads LLLTVAFLCSAVLAMFGYFLVRKY. The short motif at 106 to 110 is the Selectivity filter part_1 element; that stretch reads GSGIP. S107 contributes to the chloride binding site. The segment at residues 109 to 116 is an intramembrane region (helical); sequence IPEIEGAL. At 117–123 the chain is on the cytoplasmic side; that stretch reads EDQRPVR. The next 2 helical transmembrane spans lie at 124–141 and 148–166; these read WWRVLPVKFFGGLGTLGG and EGPTVQIGGNIGRMVLDVF. Positions 146–150 match the Selectivity filter part_2 motif; sequence GREGP. The Cytoplasmic portion of the chain corresponds to 167 to 176; it reads RLKGDEARHT. 2 intramembrane regions (helical) span residues 177-189 and 193-201; these read LLATGAAAGLAAA and PLAGILFII. Topologically, residues 202–214 are cytoplasmic; it reads EEMRPQFRYTLIS. The chain crosses the membrane as a helical span at residues 215 to 232; it reads IKAVFIGVIMSTIMYRIF. The Periplasmic segment spans residues 233–252; the sequence is NHEVALIDVGKLSDAPLNTL. Residues 253 to 281 traverse the membrane as a helical segment; that stretch reads WLYLILGIIFGIFGPIFNKWVLGMQDLLH. Residues 282–287 lie on the Cytoplasmic side of the membrane; the sequence is RVHGGN. A helical membrane pass occupies residues 288–309; the sequence is ITKWVLMGGAIGGLCGLLGFVA. Topologically, residues 310–329 are periplasmic; it reads PATSGGGFNLIPIATAGNFS. The next 2 membrane-spanning stretches (helical) occupy residues 330–349 and 355–376; these read MGMLVFIFVARVITTLLCFS and GIFAPMLALGTVLGTAFGMVAV. The short motif at 355-359 is the Selectivity filter part_3 element; that stretch reads GIFAP. I356 and F357 together coordinate chloride. Topologically, residues 377-386 are periplasmic; the sequence is ELFPQYHLEA. Positions 387–401 form an intramembrane region, helical; sequence GTFAIAGMGALLAAS. An intramembrane region (note=Loop between two helices) is located at residues 402 to 404; the sequence is IRA. Positions 405 to 416 form an intramembrane region, helical; the sequence is PLTGIILVLEMT. Residues 417 to 421 constitute an intramembrane region (note=Loop between two helices); it reads DNYQL. A helical transmembrane segment spans residues 422-438; that stretch reads ILPMIITGLGATLLAQF. The Cytoplasmic segment spans residues 439–473; that stretch reads TGGKPLYSAILARTLAKQEAEQLARSKAASASENT. Y445 provides a ligand contact to chloride.

It belongs to the chloride channel (TC 2.A.49) family. ClcA subfamily. Homodimer.

It is found in the cell inner membrane. The catalysed reaction is 2 chloride(in) + H(+)(out) = 2 chloride(out) + H(+)(in). In terms of biological role, proton-coupled chloride transporter. Functions as antiport system and exchanges two chloride ions for 1 proton. Probably acts as an electrical shunt for an outwardly-directed proton pump that is linked to amino acid decarboxylation, as part of the extreme acid resistance (XAR) response. The sequence is that of H(+)/Cl(-) exchange transporter ClcA from Escherichia coli O157:H7.